The sequence spans 485 residues: Rhamnulokinase (485 aa).

An ATP-binding site is contributed by 10–14; the sequence is ASSGR. Residues Ala78 and 233–235 each bind substrate; that span reads HDT. The active-site Proton acceptor is Asp234. Residue Thr256 participates in ATP binding. Asn293 provides a ligand contact to substrate. An ATP-binding site is contributed by Gln301. Cys351 and Cys368 are oxidised to a cystine. Gly400 is a binding site for ATP.

This sequence belongs to the rhamnulokinase family. The cofactor is Mg(2+).

It catalyses the reaction L-rhamnulose + ATP = L-rhamnulose 1-phosphate + ADP + H(+). It functions in the pathway carbohydrate degradation; L-rhamnose degradation; glycerone phosphate from L-rhamnose: step 2/3. Involved in the catabolism of L-rhamnose (6-deoxy-L-mannose). Catalyzes the transfer of the gamma-phosphate group from ATP to the 1-hydroxyl group of L-rhamnulose to yield L-rhamnulose 1-phosphate. In Bacillus subtilis (strain 168), this protein is Rhamnulokinase.